The primary structure comprises 625 residues: tRNA uridine 5-carboxymethylaminomethyl modification enzyme MnmG (625 aa).

Residue 14 to 19 (GAGHAG) participates in FAD binding. 273 to 287 (GPRYCPSIEDKIVRF) contacts NAD(+).

It belongs to the MnmG family. Homodimer. Heterotetramer of two MnmE and two MnmG subunits. FAD serves as cofactor.

The protein localises to the cytoplasm. Its function is as follows. NAD-binding protein involved in the addition of a carboxymethylaminomethyl (cmnm) group at the wobble position (U34) of certain tRNAs, forming tRNA-cmnm(5)s(2)U34. The protein is tRNA uridine 5-carboxymethylaminomethyl modification enzyme MnmG of Clostridium botulinum (strain Loch Maree / Type A3).